The sequence spans 172 residues: Translationally-controlled tumor protein (172 aa).

Residues 1–172 (MIIYRDLISH…FKDGLEMEKC (172 aa)) enclose the TCTP domain. 2 positions are modified to phosphoserine: Ser46 and Ser53. Ser64 carries the phosphoserine; by PLK1 modification. Residues 70–172 (VDIVMNHHLQ…FKDGLEMEKC (103 aa)) are required for reduction of TSC22D1 protein stability.

This sequence belongs to the TCTP family. As to quaternary structure, homodimer. Interacts with STEAP3. Interacts with TSC22D1; interaction results in the destabilization of TSC22D1 protein.

Its subcellular location is the cytoplasm. Functionally, involved in calcium binding and microtubule stabilization. Acts as a negative regulator of TSC22D1-mediated apoptosis, via interaction with and destabilization of TSC22D1 protein. The chain is Translationally-controlled tumor protein (Tpt1) from Mus musculus (Mouse).